A 377-amino-acid chain; its full sequence is Guanine nucleotide-binding protein subunit beta-2 (377 aa).

WD repeat units follow at residues 63–93, 105–135, 154–185, 202–233, 246–276, 293–323, and 339–369; these read GHTG…IVWN, LPCA…SIFN, GHKG…VLWD, GHTA…RLWD, GHEG…RLFD, GDIP…YVWD, and SHEG…KIWA.

Belongs to the WD repeat G protein beta family. In terms of assembly, g proteins are composed of 3 units, alpha, beta and gamma.

In terms of biological role, guanine nucleotide-binding proteins (G proteins) are involved as a modulator or transducer in various transmembrane signaling systems. The beta and gamma chains are required for the GTPase activity, for replacement of GDP by GTP, and for G protein-effector interaction. The protein is Guanine nucleotide-binding protein subunit beta-2 of Nicotiana tabacum (Common tobacco).